The sequence spans 281 residues: Diaminopimelate epimerase (281 aa).

3 residues coordinate substrate: asparagine 13, glutamine 51, and asparagine 70. Cysteine 79 (proton donor) is an active-site residue. Residues 80–81 (GN), asparagine 163, asparagine 196, and 214–215 (ER) each bind substrate. The active-site Proton acceptor is the cysteine 223. A substrate-binding site is contributed by 224–225 (GS).

It belongs to the diaminopimelate epimerase family. In terms of assembly, homodimer.

It is found in the cytoplasm. It carries out the reaction (2S,6S)-2,6-diaminopimelate = meso-2,6-diaminopimelate. The protein operates within amino-acid biosynthesis; L-lysine biosynthesis via DAP pathway; DL-2,6-diaminopimelate from LL-2,6-diaminopimelate: step 1/1. Its function is as follows. Catalyzes the stereoinversion of LL-2,6-diaminopimelate (L,L-DAP) to meso-diaminopimelate (meso-DAP), a precursor of L-lysine and an essential component of the bacterial peptidoglycan. The polypeptide is Diaminopimelate epimerase (Alcanivorax borkumensis (strain ATCC 700651 / DSM 11573 / NCIMB 13689 / SK2)).